We begin with the raw amino-acid sequence, 236 residues long: CHD1 helical C-terminal domain containing protein 1 (236 aa).

The segment at 44–145 is CHD1 helical C-terminal domain (CHCT); that stretch reads LDQDTFKTCK…SSQPAKFLVT (102 aa). The interval 184–236 is disordered; sequence LSNMQTPGQGSPLPGQPRSQDHVKKDSLRELSQKPKLKRKRIKEAPETPETEP. Positions 202–216 are enriched in basic and acidic residues; that stretch reads SQDHVKKDSLRELSQ.

It is found in the cytoplasm. It localises to the nucleus. In terms of biological role, may play a role in regulation of apoptosis. The polypeptide is CHD1 helical C-terminal domain containing protein 1 (Homo sapiens (Human)).